Consider the following 43-residue polypeptide: Parvalbumin beta (43 aa).

EF-hand domains follow at residues 1–20 (KVFEILDMDRSFIEEELKLF) and 22–43 (LSSAETAAFLKIGVEEFQALVK). Ca(2+) contacts are provided by aspartate 7, aspartate 9, serine 11, phenylalanine 12, glutamate 14, glutamate 16, and glutamate 37.

Detected in muscle and cutaneous mucus. In the skin, detected in cells in the basal region of the glandular epithelium of the dermal mucus glands (at protein level).

Its subcellular location is the cytoplasm. The protein resides in the secreted. In muscle, parvalbumin is thought to be involved in relaxation after contraction. It binds two calcium ions. This is Parvalbumin beta from Rana temporaria (European common frog).